A 420-amino-acid polypeptide reads, in one-letter code: Annetocin receptor (420 aa).

The Extracellular segment spans residues 1 to 54; it reads MEMDDDEAILLDDIYALASTPNQTIVTSSFPQTVSPGFLARRNEALAMVEVAVQ. Asn-22 is a glycosylation site (N-linked (GlcNAc...) asparagine). Residues 55–75 traverse the membrane as a helical segment; it reads STILILTVVGNAAVLAMIVSL. Topologically, residues 76-83 are cytoplasmic; that stretch reads SRHKDLGR. The chain crosses the membrane as a helical span at residues 84–104; that stretch reads MYTMIGHLSCADLFVAIFNLL. Residues 105 to 124 lie on the Extracellular side of the membrane; sequence PQLLWDVTHRFRGGRVLCKL. Cys-122 and Cys-201 are joined by a disulfide. A helical transmembrane segment spans residues 125–145; sequence VKYVQVVAMYASAYVLMSTAV. Over 146–166 the chain is Cytoplasmic; that stretch reads DRYTAICHPMRSHTWTSTTAH. The chain crosses the membrane as a helical span at residues 167–187; sequence YLVIGAWVLALVFAVPQLVIF. At 188-212 the chain is on the extracellular side; sequence DYVEVVPGSGVYDCVDHFRPRWTLP. The helical transmembrane segment at 213–233 threads the bilayer; it reads VYITWFALAVYVIPLVVLATI. The Cytoplasmic segment spans residues 234-328; it reads YLRICVVVWK…KTKTVKLTLT (95 aa). The helical transmembrane segment at 329–349 threads the bilayer; it reads VVISYLVCWAPFFVSHIWSAW. The Extracellular segment spans residues 350–360; the sequence is DPHAPFEGTEM. Residues 361–381 traverse the membrane as a helical segment; sequence VITLLLGSLNSCINPWIYLAF. Residues 382–420 are Cytoplasmic-facing; sequence SDQLRRKVTQCCPRSWGQRPSTLSHDSTDFRSGSRPTHS. The disordered stretch occupies residues 397-420; sequence WGQRPSTLSHDSTDFRSGSRPTHS. Residues 399–420 show a composition bias toward polar residues; sequence QRPSTLSHDSTDFRSGSRPTHS.

The protein belongs to the G-protein coupled receptor 1 family. Vasopressin/oxytocin receptor subfamily. In terms of tissue distribution, nephridia in clitellum region.

The protein localises to the cell membrane. Receptor for annetocin. Activation by annetocin may induce egg-laying behavior through calcium-dependent signaling. The chain is Annetocin receptor from Eisenia fetida (Red wiggler worm).